We begin with the raw amino-acid sequence, 175 residues long: Sec-independent protein translocase protein TatB (175 aa).

Residues Met1 to Gly21 form a helical membrane-spanning segment. The segment covering Gly99–Asp115 has biased composition (low complexity). The tract at residues Gly99–Ser118 is disordered.

The protein belongs to the TatB family. In terms of assembly, the Tat system comprises two distinct complexes: a TatABC complex, containing multiple copies of TatA, TatB and TatC subunits, and a separate TatA complex, containing only TatA subunits. Substrates initially bind to the TatABC complex, which probably triggers association of the separate TatA complex to form the active translocon.

The protein resides in the cell inner membrane. In terms of biological role, part of the twin-arginine translocation (Tat) system that transports large folded proteins containing a characteristic twin-arginine motif in their signal peptide across membranes. Together with TatC, TatB is part of a receptor directly interacting with Tat signal peptides. TatB may form an oligomeric binding site that transiently accommodates folded Tat precursor proteins before their translocation. The chain is Sec-independent protein translocase protein TatB from Burkholderia thailandensis (strain ATCC 700388 / DSM 13276 / CCUG 48851 / CIP 106301 / E264).